A 297-amino-acid polypeptide reads, in one-letter code: Calponin-1 (297 aa).

The Calponin-homology (CH) domain occupies 28 to 131 (HQREQELREW…STLLALASMA (104 aa)). 3 Calponin-like repeats span residues 164 to 189 (IGLQ…RHLY), 204 to 229 (ISLQ…RQIF), and 243 to 268 (VSLQ…RQVY). The residue at position 170 (threonine 170) is a Phosphothreonine; by ROCK2. A Phosphoserine; by ROCK2 modification is found at serine 175. A phosphothreonine; by ROCK2 mark is found at threonine 180 and threonine 184. Threonine 259 is modified (phosphothreonine; by ROCK2).

Belongs to the calponin family.

Functionally, thin filament-associated protein that is implicated in the regulation and modulation of smooth muscle contraction. It is capable of binding to actin, calmodulin and tropomyosin. The interaction of calponin with actin inhibits the actomyosin Mg-ATPase activity. This is Calponin-1 (CNN1) from Bos taurus (Bovine).